A 431-amino-acid polypeptide reads, in one-letter code: Zeaxanthin glucosyltransferase (431 aa).

This sequence belongs to the UDP-glycosyltransferase family.

The catalysed reaction is all-trans-zeaxanthin + 2 UDP-alpha-D-glucose = zeaxanthin bis(beta-D-glucoside) + 2 UDP + 2 H(+). It functions in the pathway carotenoid biosynthesis; zeaxanthin diglucoside biosynthesis. Catalyzes the glycosylation reaction which converts zeaxanthin to zeaxanthin bis(beta-D-glucoside). The reaction proceeds in two steps with the monoglucoside as an intermediate. The polypeptide is Zeaxanthin glucosyltransferase (crtX) (Pantoea ananas (Erwinia uredovora)).